A 743-amino-acid chain; its full sequence is Dolichyl-phosphooligosaccharide-protein glycotransferase 2 (743 aa).

Over 1–7 the chain is Cytoplasmic; it reads MKIDKRL. Residues 8–28 form a helical membrane-spanning segment; it reads MVIVAIATLFRMIPFRLKYLV. The DXD motif 1 motif lies at 29 to 31; that stretch reads GSD. Residues 29 to 91 are Extracellular-facing; the sequence is GSDPYFHLAY…FSFLGISLYT (63 aa). D31 serves as a coordination point for Mn(2+). Residues 92-112 form a helical membrane-spanning segment; sequence AFRVTPVIFGVLTVVFFYLSL. At 113 to 119 the chain is on the cytoplasmic side; the sequence is KKLYNRD. A helical membrane pass occupies residues 120-140; that stretch reads VAFIVGLFLGVNYGHIFRSMA. Residues 141–144 lie on the Extracellular side of the membrane; the sequence is NYYR. 2 residues coordinate Mn(2+): R144 and D146. A DXD motif 2 motif is present at residues 144–146; sequence RGD. A helical transmembrane segment spans residues 145–165; that stretch reads GDNYMLFWYSVALLGIALGLK. The Cytoplasmic portion of the chain corresponds to 166–170; it reads TRSKY. 2 consecutive transmembrane segments (helical) span residues 171 to 191 and 192 to 212; these read RYLFYLLPGIATGFASAFWQA and YYPIFVFVLAGGLLLGVYAYL. The Cytoplasmic segment spans residues 213–216; sequence KSPK. The chain crosses the membrane as a helical span at residues 217-237; the sequence is LFLDSILIVLSTGLGVLIANI. Topologically, residues 238–272 are extracellular; sequence LGDKVGYGMLGYTDWMGKKVAETFGLEFGFIKDAY. A helical transmembrane segment spans residues 273-293; sequence LLIHVKYLLPLSLVFLGFLII. Residues 294-302 are Cytoplasmic-facing; it reads TKKLNPKIK. A helical membrane pass occupies residues 303–323; that stretch reads VGVLVGGSILAFIVMLVKFPA. The Extracellular portion of the chain corresponds to 324-345; sequence LKDLSTGFGTFREVPISETLPP. Positions 333–336 match the TIXE motif motif; it reads TFRE. The chain crosses the membrane as a helical span at residues 346-366; the sequence is TLDDLWRAYNIAIFLAALYIL. Over 367 to 373 the chain is Cytoplasmic; sequence RLRKIRS. A helical transmembrane segment spans residues 374–391; sequence GDAILLGYVITSLWMLRY. Residues 392–394 lie on the Extracellular side of the membrane; that stretch reads WTR. R394 serves as a coordination point for a glycophospholipid. The chain crosses the membrane as a helical span at residues 395 to 415; it reads FLFTAAPAVAFLSGIGVYELT. The Cytoplasmic segment spans residues 416–424; it reads RRIKENKIR. The chain crosses the membrane as a helical span at residues 425-445; sequence ITSLGVVILLSSAFSLGEVYS. At 446 to 743 the chain is on the extracellular side; that stretch reads VKPFMNENWE…LDRGIVRVKN (298 aa). Residues 474-476 form an interacts with target acceptor peptide in protein substrate region; the sequence is WWD. The WWDYG motif motif lies at 474-478; sequence WWDWG. A DK motif motif is present at residues 526–533; that stretch reads DILKFEAI.

This sequence belongs to the STT3 family. Mn(2+) serves as cofactor. Requires Mg(2+) as cofactor.

The protein resides in the cell membrane. The catalysed reaction is an archaeal dolichyl phosphooligosaccharide + [protein]-L-asparagine = an archaeal dolichyl phosphate + a glycoprotein with the oligosaccharide chain attached by N-beta-D-glycosyl linkage to a protein L-asparagine.. It functions in the pathway protein modification; protein glycosylation. Oligosaccharyl transferase (OST) that catalyzes the initial transfer of a defined glycan (ManNAcXyl(2)GlcAMan(2)GalNAc in P.furiosus) from the lipid carrier dolichol-monophosphate to an asparagine residue within an Asn-X-Ser/Thr consensus motif in nascent polypeptide chains, the first step in protein N-glycosylation. The protein is Dolichyl-phosphooligosaccharide-protein glycotransferase 2 (aglB2) of Pyrococcus furiosus (strain ATCC 43587 / DSM 3638 / JCM 8422 / Vc1).